Here is a 242-residue protein sequence, read N- to C-terminus: Probable transcriptional regulatory protein lp_2253 (242 aa).

A disordered region spans residues 1-21 (MSGHSKWHNIQGRKNAQDAKR).

Belongs to the TACO1 family.

The protein resides in the cytoplasm. The polypeptide is Probable transcriptional regulatory protein lp_2253 (Lactiplantibacillus plantarum (strain ATCC BAA-793 / NCIMB 8826 / WCFS1) (Lactobacillus plantarum)).